The following is a 270-amino-acid chain: MSSTKSDFEIIREYIIGDGKDISVGKAPEGNVRLEITHSVLTGESLGTNNFKNFSLDLKIKDFKEKLYRFVGTEPKYMELILRDENKVNDICKIDDDDDKTLGSYEPKDGMNVHIIDKDPNNFVSELQDISKAPKPVISEEDYNKREGTYKKWKEENQLKKENDTTATTVTATTTTTNNATDTEIEIKVGDRCKVISDDPTNYDERLGKVQYVGTVEFSSGVWIGVELDLPLGKNDGSVKGKQYFQCSPKYGCFAKPKNVLVGDYPEEEI.

The CAP-Gly domain maps to 214–256 (GTVEFSSGVWIGVELDLPLGKNDGSVKGKQYFQCSPKYGCFAK).

Belongs to the TBCB family. In terms of assembly, supercomplex made of cofactors A to E. Cofactors A and D function by capturing and stabilizing tubulin in a quasi-native conformation. Cofactor E binds to the cofactor D-tubulin complex; interaction with cofactor C then causes the release of tubulin polypeptides that are committed to the native state.

The protein resides in the cytoplasm. It localises to the cytoskeleton. Functionally, binds to alpha-tubulin folding intermediates after their interaction with cytosolic chaperonin in the pathway leading from newly synthesized tubulin to properly folded heterodimer. The sequence is that of Tubulin-specific chaperone B (tbcb) from Dictyostelium discoideum (Social amoeba).